A 215-amino-acid chain; its full sequence is Probable transaldolase (215 aa).

The Schiff-base intermediate with substrate role is filled by lysine 83.

It belongs to the transaldolase family. Type 3B subfamily.

The protein resides in the cytoplasm. The catalysed reaction is D-sedoheptulose 7-phosphate + D-glyceraldehyde 3-phosphate = D-erythrose 4-phosphate + beta-D-fructose 6-phosphate. It participates in carbohydrate degradation; pentose phosphate pathway; D-glyceraldehyde 3-phosphate and beta-D-fructose 6-phosphate from D-ribose 5-phosphate and D-xylulose 5-phosphate (non-oxidative stage): step 2/3. Its function is as follows. Transaldolase is important for the balance of metabolites in the pentose-phosphate pathway. The polypeptide is Probable transaldolase (Moorella thermoacetica (strain ATCC 39073 / JCM 9320)).